Here is a 328-residue protein sequence, read N- to C-terminus: MSNTVVCALYRFVSLENYQEIQAPLLKMMQANNIKGTLLLAQEGINGTVAGSREDINTLIAWLKSDPRLNKLTTKESFTEENPFYRTKVKLKKEIVTMGVEGIDPKRTAGSYVKPKDWNALISDPDVLLVDTRNDYEISIGTFKNAVDPKTTNFREFPQYVKDNLDPAVNKKVAMFCTGGIRCEKSTAYLKEQGFDEVYHLEGGVLKYLEEVPQEESMWQGECFVFDNRVSVNHKLEKGQYDQCHGCRLPITEDDKKSDKYQEGVCCHQCHEQLTVEQKQRFAQREKQVGLAKQRGQTHIGNDAVAQLENNRLKKQAVKQAQRVEAKK.

In terms of domain architecture, Rhodanese spans Ser123–Ser217. Cys177 serves as the catalytic Cysteine persulfide intermediate.

This sequence belongs to the TrhO family.

The catalysed reaction is uridine(34) in tRNA + AH2 + O2 = 5-hydroxyuridine(34) in tRNA + A + H2O. Functionally, catalyzes oxygen-dependent 5-hydroxyuridine (ho5U) modification at position 34 in tRNAs. The polypeptide is tRNA uridine(34) hydroxylase (Psychromonas ingrahamii (strain DSM 17664 / CCUG 51855 / 37)).